Reading from the N-terminus, the 521-residue chain is CD166 antigen (521 aa).

Topologically, residues 1-465 (GSPVFIAFRS…NREKVNDQAK (465 aa)) are extracellular. N-linked (GlcNAc...) asparagine glycosylation is found at Asn29, Asn33, Asn105, Asn203, Asn244, Asn299, Asn395, Asn418, and Asn437. In terms of domain architecture, Ig-like V-type 2 spans 63-172 (PTVVKVFKQP…YGPSGQKTVH (110 aa)). A disulfide bridge connects residues Cys95 and Cys158. Ig-like C2-type domains are found at residues 183 to 266 (PTEQ…TAIT), 271 to 347 (DLSL…ESLT), and 354 to 439 (PQIK…LNVS). 3 disulfide bridges follow: Cys208/Cys251, Cys292/Cys330, and Cys373/Cys423. The helical transmembrane segment at 466 to 487 (LIVGIVVGLLLAALVAGVVYWL) threads the bilayer. Over 488-521 (YMKKSKTASKHVNKDLGNMEENKKLEENNHKTEA) the chain is Cytoplasmic. A disordered region spans residues 500-521 (NKDLGNMEENKKLEENNHKTEA). Positions 507–521 (EENKKLEENNHKTEA) are enriched in basic and acidic residues.

Homodimer. Interacts (via extracellular domain) with CD6 (via extracellular domain). Homodimerization and interaction with CD6 involve the same region and cannot occur simultaneously. The affinity for CD6 is much higher than the affinity for self-association. Interacts (via glycosylated extracellular domain) with LGALS1 and LGALS3. Interaction with LGALS1 or LGALS3 inhibits interaction with CD6. Post-translationally, glycosylated.

Its subcellular location is the cell membrane. The protein resides in the cell projection. It is found in the axon. The protein localises to the dendrite. In terms of biological role, cell adhesion molecule that mediates both heterotypic cell-cell contacts via its interaction with CD6, as well as homotypic cell-cell contacts. Promotes T-cell activation and proliferation via its interactions with CD6. Contributes to the formation and maturation of the immunological synapse via its interactions with CD6. Mediates homotypic interactions with cells that express ALCAM. Mediates attachment of dendritic cells onto endothelial cells via homotypic interaction. Inhibits endothelial cell migration and promotes endothelial tube formation via homotypic interactions. Required for normal organization of the lymph vessel network. Required for normal hematopoietic stem cell engraftment in the bone marrow. Plays a role in hematopoiesis; required for normal numbers of hematopoietic stem cells in bone marrow. Promotes in vitro osteoblast proliferation and differentiation. Promotes neurite extension, axon growth and axon guidance; axons grow preferentially on surfaces that contain ALCAM. Mediates outgrowth and pathfinding for retinal ganglion cell axons. The chain is CD166 antigen (ALCAM) from Oryctolagus cuniculus (Rabbit).